A 107-amino-acid chain; its full sequence is Quaternary ammonium compound-resistance protein QacH (107 aa).

The next 4 helical transmembrane spans lie at Met-1–Lys-21, Phe-26–Leu-46, Ile-57–Ile-77, and Leu-84–Gly-104.

Belongs to the drug/metabolite transporter (DMT) superfamily. Small multidrug resistance (SMR) (TC 2.A.7.1) family.

It localises to the cell membrane. Multidrug exporter. Is implicated for the resistance to bacteriocidal quaternary ammonium compounds. The chain is Quaternary ammonium compound-resistance protein QacH (qacH) from Staphylococcus saprophyticus.